The following is a 268-amino-acid chain: Tryptophan synthase alpha chain (268 aa).

Active-site proton acceptor residues include E49 and D60.

Belongs to the TrpA family. Tetramer of two alpha and two beta chains.

The catalysed reaction is (1S,2R)-1-C-(indol-3-yl)glycerol 3-phosphate + L-serine = D-glyceraldehyde 3-phosphate + L-tryptophan + H2O. Its pathway is amino-acid biosynthesis; L-tryptophan biosynthesis; L-tryptophan from chorismate: step 5/5. Functionally, the alpha subunit is responsible for the aldol cleavage of indoleglycerol phosphate to indole and glyceraldehyde 3-phosphate. The protein is Tryptophan synthase alpha chain of Xanthomonas euvesicatoria pv. vesicatoria (strain 85-10) (Xanthomonas campestris pv. vesicatoria).